A 2311-amino-acid polypeptide reads, in one-letter code: Protein Ycf2 (2311 aa).

1652–1659 (GSIGTGRS) contributes to the ATP binding site.

The protein belongs to the Ycf2 family.

It localises to the plastid. Its subcellular location is the chloroplast stroma. Its function is as follows. Probable ATPase of unknown function. Its presence in a non-photosynthetic plant (Epifagus virginiana) and experiments in tobacco indicate that it has an essential function which is probably not related to photosynthesis. The protein is Protein Ycf2 of Lemna minor (Common duckweed).